The primary structure comprises 438 residues: Argininosuccinate lyase (438 aa).

This sequence belongs to the lyase 1 family. Argininosuccinate lyase subfamily.

The protein resides in the cytoplasm. The enzyme catalyses 2-(N(omega)-L-arginino)succinate = fumarate + L-arginine. It functions in the pathway amino-acid biosynthesis; L-arginine biosynthesis; L-arginine from L-ornithine and carbamoyl phosphate: step 3/3. The polypeptide is Argininosuccinate lyase (Clostridium kluyveri (strain NBRC 12016)).